Reading from the N-terminus, the 402-residue chain is Multidrug resistance protein MdtG (402 aa).

Helical transmembrane passes span 14–34 (LYIV…IMPF), 52–72 (LWTG…APFW), 90–110 (LGMA…QLLI), 113–133 (ALLG…ATQV), 149–169 (AVSG…LYGL), 171–191 (PVFF…LFFV), 219–239 (VICL…VTPI), 254–274 (LAFI…ISAP), 288–308 (VLIF…LVSN), 318–338 (LLGA…LYNI), and 376–396 (AVFY…WISF).

It belongs to the major facilitator superfamily. DHA1 family. MdtG (TC 2.A.1.2.20) subfamily.

The protein localises to the cell inner membrane. This is Multidrug resistance protein MdtG from Proteus mirabilis (strain HI4320).